A 315-amino-acid chain; its full sequence is PDZ domain-containing protein GIPC2 (315 aa).

Positions M1–K12 are enriched in basic residues. The disordered stretch occupies residues M1–A34. The 81-residue stretch at E117–E197 folds into the PDZ domain.

It belongs to the GIPC family. As to quaternary structure, probably interacts with SEMA5A. Expressed at highest levels in ascending colon and at moderate levels in adult kidney. Expressed at low levels in adult pancreas and at very low levels in adult liver. Expression is down-regulated in several primary tumors, such as kidney, colon and rectal tumors.

The protein localises to the cytoplasm. In Homo sapiens (Human), this protein is PDZ domain-containing protein GIPC2 (GIPC2).